A 342-amino-acid chain; its full sequence is MLDERARTLLKTLVEHYVADGQPVGSRALSKFSGLDLSPATIRNVMADLEEAGFVASPHTSAGRIPTARGYRLFVDSLLTVQPLEARQMGEMEEALHGRPAGQIIASASQLLSSLTHFAGVVIAPRRQSSRIRQIEFLSLSEKRILLIIVTADGDVQNRIVTTDKVYSPAELVSAANYLTQNFAGLDFEQIRHRLTVEIKQLRDDIKPLMALALDAGDAAMAENTTPYVISGERNLLDVEELSSNMKRLRELFDLFEQRSSLMRLLEISNSAEGVQIFIGGESGIATLDECSVIAAPYTVDGQVVGSVGVIGPTRMAYERVIPIVDITARLLSSALSYKSDN.

Belongs to the HrcA family.

Its function is as follows. Negative regulator of class I heat shock genes (grpE-dnaK-dnaJ and groELS operons). Prevents heat-shock induction of these operons. The polypeptide is Heat-inducible transcription repressor HrcA (Dechloromonas aromatica (strain RCB)).